The chain runs to 883 residues: Protein P (883 aa).

Residues 1-183 form a terminal protein domain (TP) region; the sequence is MHPFSRLFRN…GKPYSWEHRQ (183 aa). Residues 184-386 are spacer; that stretch reads LVQHNGQQHK…YCIHHIVSSL (203 aa). Residues 298 to 344 are disordered; sequence RNSGHTTWFSSASNSNKSRSREKAYSSNSTSKRYSPPLNYEKSDFSS. The polymerase/reverse transcriptase domain (RT) stretch occupies residues 387-728; the sequence is DDWGPCTVTG…YEELWPVVRQ (342 aa). The 242-residue stretch at 397–638 folds into the Reverse transcriptase domain; that stretch reads DVTIKSPRTP…NHLHFMGYVI (242 aa). Positions 469, 589, and 590 each coordinate Mg(2+).

The protein belongs to the hepadnaviridae P protein family.

The catalysed reaction is DNA(n) + a 2'-deoxyribonucleoside 5'-triphosphate = DNA(n+1) + diphosphate. It catalyses the reaction Endonucleolytic cleavage to 5'-phosphomonoester.. Its activity is regulated as follows. Activated by host HSP70 and HSP40 in vitro to be able to bind the epsilon loop of the pgRNA. Because deletion of the RNase H region renders the protein partly chaperone-independent, the chaperones may be needed indirectly to relieve occlusion of the RNA-binding site by this domain. Inhibited by several reverse-transcriptase inhibitors: Lamivudine, Adefovir and Entecavir. Multifunctional enzyme that converts the viral RNA genome into dsDNA in viral cytoplasmic capsids. This enzyme displays a DNA polymerase activity that can copy either DNA or RNA templates, and a ribonuclease H (RNase H) activity that cleaves the RNA strand of RNA-DNA heteroduplexes in a partially processive 3'- to 5'-endonucleasic mode. Neo-synthesized pregenomic RNA (pgRNA) are encapsidated together with the P protein, and reverse-transcribed inside the nucleocapsid. Initiation of reverse-transcription occurs first by binding the epsilon loop on the pgRNA genome, and is initiated by protein priming, thereby the 5'-end of (-)DNA is covalently linked to P protein. Partial (+)DNA is synthesized from the (-)DNA template and generates the relaxed circular DNA (RC-DNA) genome. After budding and infection, the RC-DNA migrates in the nucleus, and is converted into a plasmid-like covalently closed circular DNA (cccDNA). The activity of P protein does not seem to be necessary for cccDNA generation, and is presumably released from (+)DNA by host nuclear DNA repair machinery. The protein is Protein P of Woodchuck hepatitis B virus (isolate 2) (WHV).